Here is a 161-residue protein sequence, read N- to C-terminus: MAKQSGIKWLWLSLVVITLDLFSKYLVVERFELYESINILPIFNLTYARNYGAAFSFLADHSGWQKYLFLTLAIIISFILANVLRRNQIDQKRENMAYALIIGGAIGNAIDRAYRGYVVDFFDFYWHIYHYPVFNIADVAIVMGAGLLILETFLDKKKKSD.

A run of 3 helical transmembrane segments spans residues 9–29 (WLWL…LVVE), 64–84 (WQKY…ANVL), and 96–113 (MAYA…IDRA). Active-site residues include D120 and D138. A helical membrane pass occupies residues 133–153 (VFNIADVAIVMGAGLLILETF).

Belongs to the peptidase A8 family.

Its subcellular location is the cell inner membrane. It carries out the reaction Release of signal peptides from bacterial membrane prolipoproteins. Hydrolyzes -Xaa-Yaa-Zaa-|-(S,diacylglyceryl)Cys-, in which Xaa is hydrophobic (preferably Leu), and Yaa (Ala or Ser) and Zaa (Gly or Ala) have small, neutral side chains.. It participates in protein modification; lipoprotein biosynthesis (signal peptide cleavage). Its function is as follows. This protein specifically catalyzes the removal of signal peptides from prolipoproteins. This chain is Lipoprotein signal peptidase, found in Haemophilus ducreyi (strain 35000HP / ATCC 700724).